We begin with the raw amino-acid sequence, 345 residues long: MLLFGFLLLTFALVSQRQGAEAESNLSSKFQFSSAKEQNGVQEPQHEKIITVSANGSIHSPKFPYTYPRNTVLVWRLVAIEENVLIQLTFDERFGLEDPEDDICKYDFVEVEEPSDGSILGRWCGSTAVPGKQISKGNQIRIRFVSDEYFPSEPGFCIHYTLLTPHQTESASPTVLPPSAFSLDLLNNAVAGFSTVEELIRYLEPDRWQLDLEDLYKPAWQLLGKAYIHGRKSRVVDLNLLKEEVRMYSCTPRNFSVSLREELKRTDTIFWPLCLLVKRCGGNCACCQHSCSECQCIPTKVTKKYHEVLQLKPRSGVRGLHKSLTDVPLEHHEECECVCKGNAEG.

Residues 1–22 form the signal peptide; it reads MLLFGFLLLTFALVSQRQGAEA. Asn-25 and Asn-55 each carry an N-linked (GlcNAc...) asparagine glycan. The CUB domain maps to 46 to 163; sequence HEKIITVSAN…PGFCIHYTLL (118 aa). Cystine bridges form between Cys-104-Cys-124, Cys-250-Cys-294, Cys-280-Cys-335, and Cys-287-Cys-337.

Belongs to the PDGF/VEGF growth factor family. Homodimer; disulfide-linked. Interacts with PDGFRA homodimers, and with heterodimers formed by PDGFRA and PDGFRB. Post-translationally, proteolytic removal of the N-terminal CUB domain releasing the core domain is necessary for unmasking the receptor-binding epitopes of the core domain. Cleavage after basic residues in the hinge region (region connecting the CUB and growth factor domains) gives rise to the receptor-binding form.

It localises to the secreted. Its function is as follows. Growth factor that plays an essential role in the regulation of embryonic development, cell proliferation, cell migration, survival and chemotaxis. Potent mitogen and chemoattractant for cells of mesenchymal origin. Required for normal skeleton formation during embryonic development. Required for normal skin morphogenesis during embryonic development. Plays an important role in wound healing, in angiogenesis and blood vessel development. This is Platelet-derived growth factor C (PDGFC) from Gekko japonicus (Schlegel's Japanese gecko).